A 324-amino-acid polypeptide reads, in one-letter code: Cytochrome c biogenesis protein CcsA (324 aa).

8 consecutive transmembrane segments (helical) span residues 17–37 (IISV…IPAL), 44–64 (GMIA…IYSG), 68–88 (LSNL…IHMI), 99–119 (YLSA…TSGL), 145–165 (MLLS…LLVI), 230–250 (VISI…VWAN), 264–278 (TWAF…IYSH), and 291–311 (AIVA…VNLL).

This sequence belongs to the CcmF/CycK/Ccl1/NrfE/CcsA family. In terms of assembly, may interact with Ccs1.

The protein resides in the plastid. Its subcellular location is the chloroplast thylakoid membrane. Its function is as follows. Required during biogenesis of c-type cytochromes (cytochrome c6 and cytochrome f) at the step of heme attachment. This is Cytochrome c biogenesis protein CcsA from Lemna minor (Common duckweed).